The primary structure comprises 480 residues: Ribosome assembly protein rrb1 (480 aa).

2 disordered regions span residues methionine 1 to glycine 78 and glutamine 155 to histidine 176. Acidic residues-rich tracts occupy residues valine 28–alanine 52 and glutamate 158–proline 172. Serine 163 and serine 166 each carry phosphoserine. WD repeat units lie at residues glycine 183–aspartate 225, serine 289–alanine 329, alanine 334–serine 375, tryptophan 385–glutamate 425, and methionine 446–phenylalanine 480.

As to quaternary structure, associates with ribosomal protein L3.

It localises to the cytoplasm. The protein localises to the nucleus. It is found in the nucleolus. Involved in regulation of L3 expression and stability and plays a role in early 60S ribosomal subunit assembly. May be required for proper assembly of pre-ribosomal particles during early ribosome biogenesis, presumably by targeting L3 onto the 35S precursor rRNA. The protein is Ribosome assembly protein rrb1 (rrb1) of Schizosaccharomyces pombe (strain 972 / ATCC 24843) (Fission yeast).